Reading from the N-terminus, the 160-residue chain is RxLR effector protein PexRD44 (160 aa).

The first 21 residues, 1–21 (MRLLLWVLISMLSIALSSCAA), serve as a signal peptide directing secretion. Positions 54–76 (RFLRGESSKIVNLKQEEGVFEER) match the RxLR-dEER motif.

It belongs to the RxLR effector family.

Its subcellular location is the secreted. It is found in the host cell membrane. The protein localises to the host nucleus. The protein resides in the host nucleolus. Its function is as follows. Effector that is involved in host plant infection. Contributes to virulence during the early infection stage, by inhibiting plant defense responses induced by both PAMP-triggered immunity (PTI) and effector-triggered immunity (ETI). This Phytophthora infestans (strain T30-4) (Potato late blight agent) protein is RxLR effector protein PexRD44.